The chain runs to 364 residues: Chorismate synthase (364 aa).

NADP(+) is bound by residues Arg-48 and Arg-54. Residues 125-127 (RSS), 238-239 (NA), Gly-278, 293-297 (KPTSS), and Arg-319 each bind FMN.

This sequence belongs to the chorismate synthase family. Homotetramer. Requires FMNH2 as cofactor.

The catalysed reaction is 5-O-(1-carboxyvinyl)-3-phosphoshikimate = chorismate + phosphate. It functions in the pathway metabolic intermediate biosynthesis; chorismate biosynthesis; chorismate from D-erythrose 4-phosphate and phosphoenolpyruvate: step 7/7. In terms of biological role, catalyzes the anti-1,4-elimination of the C-3 phosphate and the C-6 proR hydrogen from 5-enolpyruvylshikimate-3-phosphate (EPSP) to yield chorismate, which is the branch point compound that serves as the starting substrate for the three terminal pathways of aromatic amino acid biosynthesis. This reaction introduces a second double bond into the aromatic ring system. The protein is Chorismate synthase of Shewanella woodyi (strain ATCC 51908 / MS32).